Here is a 582-residue protein sequence, read N- to C-terminus: Vesicular glutamate transporter 2 (582 aa).

The Cytoplasmic segment spans residues 1 to 71; it reads MESVKQRILA…CTCFGLPRRY (71 aa). A helical membrane pass occupies residues 72–92; sequence IIAIMSGLGFCISFGIRCNLG. The Vesicular portion of the chain corresponds to 93-125; that stretch reads VAIVDMVNNSTIHRGGKVIKEKAKFNWDPETVG. Residues N100 and N101 are each glycosylated (N-linked (GlcNAc...) asparagine). A helical transmembrane segment spans residues 126-146; that stretch reads MIHGSFFWGYIITQIPGGYIA. Residues 147–148 are Cytoplasmic-facing; that stretch reads SR. Residues 149–169 traverse the membrane as a helical segment; that stretch reads LAANRVFGAAILLTSTLNMLI. Topologically, residues 170 to 177 are vesicular; that stretch reads PSAARVHY. The chain crosses the membrane as a helical span at residues 178–198; that stretch reads GCVIFVRILQGLVEGVTYPAC. The Cytoplasmic portion of the chain corresponds to 199–216; it reads HGIWSKWAPPLERSRLAT. Residues 217–237 traverse the membrane as a helical segment; that stretch reads TSFCGSYAGAVIAMPLAGILV. Residues 238 to 244 are Vesicular-facing; the sequence is QYTGWSS. Residues 245–265 traverse the membrane as a helical segment; the sequence is VFYVYGSFGMVWYMFWLLVSY. Residues 266–310 lie on the Cytoplasmic side of the membrane; the sequence is ESPAKHPTITDEERRYIEESIGESANLLGAMEKFKTPWRKFFTSM. A helical transmembrane segment spans residues 311–331; that stretch reads PVYAIIVANFCRSWTFYLLLI. The Vesicular portion of the chain corresponds to 332-349; the sequence is SQPAYFEEVFGFEISKVG. The chain crosses the membrane as a helical span at residues 350–370; it reads MLSAVPHLVMTIIVPIGGQIA. The Cytoplasmic segment spans residues 371-386; that stretch reads DFLRSKQILSTTTVRK. Residues 387–407 traverse the membrane as a helical segment; sequence IMNCGGFGMEATLLLVVGYSH. The Vesicular portion of the chain corresponds to 408-409; the sequence is TR. The helical transmembrane segment at 410 to 430 threads the bilayer; sequence GVAISFLVLAVGFSGFAISGF. Over 431 to 443 the chain is Cytoplasmic; that stretch reads NVNHLDIAPRYAS. The helical transmembrane segment at 444 to 464 threads the bilayer; that stretch reads ILMGISDGVGTLSGMVCPIIV. Residues 465-477 lie on the Vesicular side of the membrane; sequence GAMTKNKSREEWQ. N470 is a glycosylation site (N-linked (GlcNAc...) asparagine). The helical transmembrane segment at 478-498 threads the bilayer; the sequence is YVFLIAALVHYGGVIFYALFA. Over 499–582 the chain is Cytoplasmic; that stretch reads SGEKQPWADP…YTYKDRDDYS (84 aa).

This sequence belongs to the major facilitator superfamily. Sodium/anion cotransporter family. VGLUT subfamily. Expressed in brain. Expressed in hippocampal neurons (at protein level).

Its subcellular location is the cytoplasmic vesicle. It is found in the secretory vesicle. It localises to the synaptic vesicle membrane. The protein localises to the synapse. The protein resides in the synaptosome. Its subcellular location is the cell membrane. The enzyme catalyses L-glutamate(out) = L-glutamate(in). It carries out the reaction K(+)(in) + H(+)(out) = K(+)(out) + H(+)(in). The catalysed reaction is 3 Na(+)(out) + phosphate(out) = 3 Na(+)(in) + phosphate(in). It catalyses the reaction phosphate(in) = phosphate(out). The enzyme catalyses chloride(in) = chloride(out). Chloride channel activity is allosterically activated by lumenal H(+) and Cl(-) leading to synaptic vesicles acidification. The L-glutamate transport activity is allosterically activated by lumenal H(+) and Cl(-). The allosteric requirement for H(+) efficiently prevents non-vesicular efflux across the plasma membrane. The L-glutamate uniporter activity exhibits a biphasic dependence on chloride concentration. In terms of biological role, multifunctional transporter that transports L-glutamate as well as multiple ions such as chloride, proton, potassium, sodium and phosphate. At the synaptic vesicle membrane, mainly functions as a uniporter which transports preferentially L-glutamate but also, phosphate from the cytoplasm into synaptic vesicles at presynaptic nerve terminals of excitatory neural cells. The L-glutamate or phosphate uniporter activity is electrogenic and is driven by the proton electrochemical gradient, mainly by the electrical gradient established by the vacuolar H(+)-ATPase across the synaptic vesicle membrane. In addition, functions as a chloride channel that allows a chloride permeation through the synaptic vesicle membrane therefore affects the proton electrochemical gradient and promotes synaptic vesicles acidification. Moreover, functions as a vesicular K(+)/H(+) antiport allowing to maintain the electrical gradient and to decrease chemical gradient and therefore sustain vesicular glutamate uptake. The vesicular H(+)/H(+) antiport activity is electroneutral. At the plasma membrane, following exocytosis, functions as a symporter of Na(+) and phosphate from the extracellular space to the cytoplasm allowing synaptic phosphate homeostasis regulation. The symporter activity is driven by an inside negative membrane potential and is electrogenic. Also involved in the regulation of retinal hyaloid vessel regression during postnatal development. May also play a role in the endocrine glutamatergic system of other tissues such as pineal gland and pancreas. The protein is Vesicular glutamate transporter 2 of Mus musculus (Mouse).